A 125-amino-acid polypeptide reads, in one-letter code: Secreted RxLR effector protein 55 (125 aa).

Positions 1–21 (MAASRSSITTLLLLIVAVALG) are cleaved as a signal peptide. A RxLR motif is present at residues 35–38 (RQLR). Over residues 51–87 (ESATSSSSSSALDHKSSAPGEATNASETEHSAASTAS) the composition is skewed to low complexity. The tract at residues 51–96 (ESATSSSSSSALDHKSSAPGEATNASETEHSAASTASEPKHEGPTM) is disordered. Asparagine 74 carries an N-linked (GlcNAc...) asparagine glycan. The helical transmembrane segment at 99–119 (FVGPAAAGVLAILLIGAVIAF) threads the bilayer.

It belongs to the RxLR effector family.

Its subcellular location is the secreted. The protein localises to the host cell membrane. Effector that acts as a broad suppressor of cell death to interrupt plant immunity. Inhibits cell death induced by cell death-inducing proteins, including the PAMP elicitor INF1 from P.infestans. The protein is Secreted RxLR effector protein 55 of Plasmopara viticola (Downy mildew of grapevine).